The following is a 322-amino-acid chain: MAAAPSESIPSVNKAWVYSEYGKTSDVLKFDPSVAVPEVKEDQVLIKVVAASLNPVDFKRALGYFKDTDSPLPTVPGYDVAGVVVKVGSQVTKFKVGDEVYGDLNEAALVNPTRFGSLAEYTAADERVLAHKPKDLSFIEAASLPLAIETAYEGLERAELSAGKSILVLGGAGGVGTHIIQLAKHVFGASKVAATASTKKLDFLRTLGVDLAIDYTKENIEDLPEKFDVVYDAVGETDKAVKAVKEGGKVVTIVGPATPPAIHFVLTSKGSVLEKLKPYLESGKVKPVLDPTSPYPFTKLVEAFGYLESSRATGKVVVYPIP.

NADP(+) is bound by residues Lys-59, 174-175 (GV), 197-200 (STKK), Tyr-215, Ile-253, 264-266 (FVL), 311-312 (RA), and 311-322 (RATGKVVVYPIP). Lys-59 provides a ligand contact to substrate.

Belongs to the zinc-containing alcohol dehydrogenase family. Quinone oxidoreductase subfamily. In terms of assembly, monomer. Post-translationally, the N-terminus is blocked.

The enzyme catalyses 4-hydroxy-2,5-dimethyl-furan-3(2H)-one + NADP(+) = 4-hydroxy-5-methyl-2-methylenefuran-3(2H)-one + NADPH + H(+). In terms of biological role, enone oxidoreductase involved in the biosynthesis of 4-hydroxy-2,5-dimethyl-3(2H)-furanone (HDMF or furaneol), the key flavor compound in strawberries. Can use both NADH and NADPH as the electron donor. The polypeptide is 2-methylene-furan-3-one reductase (EO) (Fragaria ananassa (Strawberry)).